The primary structure comprises 358 residues: Tripartite motif-containing protein 54 (358 aa).

Residues 26-82 form an RING-type zinc finger; sequence CPICLEMFSKPVVILPCQHNLCRKCANDVFQASNPLWQSRGSTTVSSGGRFRCPSCR. The B box-type zinc-finger motif lies at 121–163; sequence EQHLMCEEHEEEKINIYCLSCEVPTCSLCKVFGAHKDCEVAPL. C126, H129, C149, and H155 together coordinate Zn(2+). Residues 168 to 211 form a mediates microtubule-binding and homooligomerization region; sequence KRQKSELSDGIAMLVAGNDRVQAVITQMEEVCQTIEDNSRRQKQ. Residues 220–258 adopt a coiled-coil conformation; it reads LCAVLEERKGELLQALAREQEEKLQRVRGLIRQYGDHLE. In terms of domain architecture, COS spans 271–329; sequence MEEPQMALYLQQAKELINKVGAMSKVELAGRPEPGYESMEQFTVRVEHVAEMLRTIDFQ. A disordered region spans residues 326–358; the sequence is IDFQPGASGEEEEVAPDGEEGSAGPEEERPDGP. Residues 334 to 345 are compositionally biased toward acidic residues; the sequence is GEEEEVAPDGEE.

In terms of assembly, homooligomer and heterooligomer. Interacts with tubulin. Interacts with TRIM63 and probably with TRIM55. As to expression, specifically expressed in heart and skeletal muscle.

It is found in the cytoplasm. It localises to the cytoskeleton. The protein resides in the myofibril. Its subcellular location is the sarcomere. The protein localises to the z line. May bind and stabilize microtubules during myotubes formation. The sequence is that of Tripartite motif-containing protein 54 (TRIM54) from Homo sapiens (Human).